Reading from the N-terminus, the 369-residue chain is Glycolate oxidase 1 (369 aa).

Positions 1–360 (MGEITNVMEY…TRKHIITESD (360 aa)) constitute an FMN hydroxy acid dehydrogenase domain. Tyrosine 25 serves as a coordination point for glyoxylate. Residues 78-80 (PTA), serine 107, 128-130 (QLY), and threonine 156 each bind FMN. Position 130 (tyrosine 130) interacts with glyoxylate. Arginine 165 lines the glyoxylate pocket. FMN is bound by residues lysine 231 and serine 253. Glyoxylate is bound by residues histidine 255 and arginine 258. Histidine 255 (proton acceptor) is an active-site residue. Residues 286–290 (DGGVR) and 309–310 (GR) contribute to the FMN site.

The protein belongs to the FMN-dependent alpha-hydroxy acid dehydrogenase family. In terms of assembly, homotetramer. Requires FMN as cofactor.

It is found in the peroxisome. The enzyme catalyses glycolate + O2 = glyoxylate + H2O2. It participates in photosynthesis; photorespiration; glycine from 2-phosphoglycolate: step 2/3. Catalyzes the oxidation of glycolate to glyoxylate, with a reduction of O2 to H2O2. Is an essential enzyme in photorespiration in plants. Photorespiration plays a vital role in C4 photosynthesis in Z.mays and is essential for maize seedling development and maintaining low (non-toxic) levels of glycolate. The sequence is that of Glycolate oxidase 1 from Zea mays (Maize).